A 199-amino-acid chain; its full sequence is Holliday junction branch migration complex subunit RuvA (199 aa).

The segment at Met1–Leu64 is domain I. Residues Asp65 to Glu143 form a domain II region. Positions Gln144–Leu148 are flexible linker. Residues Leu148–Arg199 are domain III.

The protein belongs to the RuvA family. In terms of assembly, homotetramer. Forms an RuvA(8)-RuvB(12)-Holliday junction (HJ) complex. HJ DNA is sandwiched between 2 RuvA tetramers; dsDNA enters through RuvA and exits via RuvB. An RuvB hexamer assembles on each DNA strand where it exits the tetramer. Each RuvB hexamer is contacted by two RuvA subunits (via domain III) on 2 adjacent RuvB subunits; this complex drives branch migration. In the full resolvosome a probable DNA-RuvA(4)-RuvB(12)-RuvC(2) complex forms which resolves the HJ.

The protein resides in the cytoplasm. Its function is as follows. The RuvA-RuvB-RuvC complex processes Holliday junction (HJ) DNA during genetic recombination and DNA repair, while the RuvA-RuvB complex plays an important role in the rescue of blocked DNA replication forks via replication fork reversal (RFR). RuvA specifically binds to HJ cruciform DNA, conferring on it an open structure. The RuvB hexamer acts as an ATP-dependent pump, pulling dsDNA into and through the RuvAB complex. HJ branch migration allows RuvC to scan DNA until it finds its consensus sequence, where it cleaves and resolves the cruciform DNA. The sequence is that of Holliday junction branch migration complex subunit RuvA from Syntrophomonas wolfei subsp. wolfei (strain DSM 2245B / Goettingen).